Reading from the N-terminus, the 337-residue chain is Nucleoid-associated protein PBPRA2585 (337 aa).

This sequence belongs to the YejK family.

Its subcellular location is the cytoplasm. It localises to the nucleoid. The polypeptide is Nucleoid-associated protein PBPRA2585 (Photobacterium profundum (strain SS9)).